The following is a 483-amino-acid chain: Glutamyl-tRNA(Gln) amidotransferase subunit A (483 aa).

Active-site charge relay system residues include Lys76 and Ser151. The Acyl-ester intermediate role is filled by Ser175.

The protein belongs to the amidase family. GatA subfamily. In terms of assembly, heterotrimer of A, B and C subunits.

The enzyme catalyses L-glutamyl-tRNA(Gln) + L-glutamine + ATP + H2O = L-glutaminyl-tRNA(Gln) + L-glutamate + ADP + phosphate + H(+). Allows the formation of correctly charged Gln-tRNA(Gln) through the transamidation of misacylated Glu-tRNA(Gln) in organisms which lack glutaminyl-tRNA synthetase. The reaction takes place in the presence of glutamine and ATP through an activated gamma-phospho-Glu-tRNA(Gln). The protein is Glutamyl-tRNA(Gln) amidotransferase subunit A of Azotobacter vinelandii (strain DJ / ATCC BAA-1303).